A 102-amino-acid chain; its full sequence is Small ribosomal subunit protein uS10 (102 aa).

This sequence belongs to the universal ribosomal protein uS10 family. As to quaternary structure, part of the 30S ribosomal subunit.

Involved in the binding of tRNA to the ribosomes. This Methanosphaera stadtmanae (strain ATCC 43021 / DSM 3091 / JCM 11832 / MCB-3) protein is Small ribosomal subunit protein uS10.